The primary structure comprises 186 residues: MQGHRIGYVRVSSFDQNPERQLEQTQVSKVFTDKASGKDTQRPQLEALLSFVREGDTVVVHSMDRLARNLDDLRRLVQKLTQRGVRIEFLKEGLVFTGEDSPMANLMLSVMGAFAEFERALIRERQREGITLAKQRGAYRGRKKALSDEQAATLRQRATAGEPKAQLAREFNISRETLYQYLRTDD.

Residues 4 to 137 enclose the Resolvase/invertase-type recombinase catalytic domain; that stretch reads HRIGYVRVSS…EGITLAKQRG (134 aa). The active-site O-(5'-phospho-DNA)-serine intermediate is Ser-12. The segment at 17–38 is disordered; sequence NPERQLEQTQVSKVFTDKASGK. The H-T-H motif DNA-binding region spans 164-183; it reads KAQLAREFNISRETLYQYLR.

It belongs to the site-specific recombinase resolvase family.

Resolvase catalyzes the resolution (a site-specific recombination) of the cointegrated replicon to yield the final transposition products. The sequence is that of Transposon Tn501 resolvase (tnpR) from Pseudomonas aeruginosa.